We begin with the raw amino-acid sequence, 332 residues long: Terpene synthase 1 (332 aa).

The DDxx(x)D/E motif motif lies at 81–86 (DDGLDA). An NDxxSxxxD/E motif motif is present at residues 221–229 (NDLVSYEKE).

It belongs to the terpene synthase family.

The enzyme catalyses (2E,6E)-farnesyl diphosphate = (2S,3R,6S,9S)-(-)-protoillud-7-ene + diphosphate. In terms of biological role, terpene synthase that converts its substrate farnesyl diphosphate (FPP) into the sesquiterpene protoillud-7-ene. This chain is Terpene synthase 1, found in Acytostelium subglobosum (Slime mold).